The primary structure comprises 1333 residues: ABC transporter ATP-binding protein/permease PDR18 (1333 aa).

The chain crosses the membrane as a helical span at residues 13-33; sequence FLEGQTFGDILCLPWTIIKGI. The region spanning 30–281 is the ABC transporter 1 domain; the sequence is IKGIRERKNR…FENMGYLCPP (252 aa). N-linked (GlcNAc...) asparagine glycosylation is found at Asn-48, Asn-144, Asn-205, and Asn-350. Transmembrane regions (helical) follow at residues 392 to 412, 425 to 445, 474 to 494, 499 to 519, 534 to 554, and 642 to 662; these read YTVINTCAAIAQAFITGSLFY, SGVLFFSLLYYSLMGLANISF, FPFRMIGLTFFIIILYFLAGL, GAFFTMYLLLTMCSEAITSLF, SIAGVVMLSIAMYSTYMIQLP, and FGIMWCFLIGYIVLRAVFTEY. 2 N-linked (GlcNAc...) asparagine glycosylation sites follow: Asn-697 and Asn-733. One can recognise an ABC transporter 2 domain in the interval 729-971; the sequence is FIWKNVSFTI…VIKYFEKNGA (243 aa). 765–772 is an ATP binding site; sequence GESGAGKT. The N-linked (GlcNAc...) asparagine glycan is linked to Asn-958. Helical transmembrane passes span 1071-1091, 1092-1112, 1150-1170, 1178-1198, 1210-1230, and 1235-1255; these read LLMISGLFIGFTFFHVGVNAI, GLQNSLFACFMAIVISAPATN, PYHLLFSTIFFVSSYFPLGVF, VFYLNYAILFQLYYIGLALMI, VIVGFILSFLLSFCGAVQPAS, and FWTFMWKLSPYTYFLQNLVGL. The N-linked (GlcNAc...) asparagine glycan is linked to Asn-1320.

It belongs to the ABC transporter superfamily. ABCG family. PDR (TC 3.A.1.205) subfamily.

The protein resides in the membrane. The chain is ABC transporter ATP-binding protein/permease PDR18 (PDR18) from Saccharomyces cerevisiae (strain ATCC 204508 / S288c) (Baker's yeast).